The primary structure comprises 147 residues: 3-dehydroquinate dehydratase (147 aa).

The active-site Proton acceptor is the Tyr-25. Asn-76, His-82, and Asp-89 together coordinate substrate. His-102 serves as the catalytic Proton donor. Residues 103-104 (LS) and Arg-113 each bind substrate.

Belongs to the type-II 3-dehydroquinase family. As to quaternary structure, homododecamer.

The enzyme catalyses 3-dehydroquinate = 3-dehydroshikimate + H2O. Its pathway is metabolic intermediate biosynthesis; chorismate biosynthesis; chorismate from D-erythrose 4-phosphate and phosphoenolpyruvate: step 3/7. Catalyzes a trans-dehydration via an enolate intermediate. This chain is 3-dehydroquinate dehydratase, found in Nostoc sp. (strain PCC 7120 / SAG 25.82 / UTEX 2576).